The sequence spans 254 residues: Pimeloyl-[acyl-carrier protein] methyl ester esterase (254 aa).

Residues Trp20, 80 to 81 (SL), and 141 to 145 (FLALQ) contribute to the substrate site. Ser80 serves as the catalytic Nucleophile. Catalysis depends on residues Asp205 and His233. His233 serves as a coordination point for substrate.

Belongs to the AB hydrolase superfamily. Carboxylesterase BioH family. In terms of assembly, monomer.

The protein localises to the cytoplasm. The catalysed reaction is 6-carboxyhexanoyl-[ACP] methyl ester + H2O = 6-carboxyhexanoyl-[ACP] + methanol + H(+). Its pathway is cofactor biosynthesis; biotin biosynthesis. In terms of biological role, the physiological role of BioH is to remove the methyl group introduced by BioC when the pimeloyl moiety is complete. It allows to synthesize pimeloyl-ACP via the fatty acid synthetic pathway through the hydrolysis of the ester bonds of pimeloyl-ACP esters. This is Pimeloyl-[acyl-carrier protein] methyl ester esterase from Methylococcus capsulatus (strain ATCC 33009 / NCIMB 11132 / Bath).